Here is a 399-residue protein sequence, read N- to C-terminus: Probable dual-specificity RNA methyltransferase RlmN (399 aa).

The Proton acceptor role is filled by glutamate 97. Residues 103–381 (YPDRATVCVS…CTVRVERGVS (279 aa)) form the Radical SAM core domain. A disulfide bridge links cysteine 110 with cysteine 386. Residues cysteine 117, cysteine 121, and cysteine 124 each contribute to the [4Fe-4S] cluster site. S-adenosyl-L-methionine-binding positions include 203 to 204 (GE), serine 235, 258 to 260 (SLH), and asparagine 343. Cysteine 386 serves as the catalytic S-methylcysteine intermediate.

This sequence belongs to the radical SAM superfamily. RlmN family. [4Fe-4S] cluster is required as a cofactor.

It localises to the cytoplasm. The catalysed reaction is adenosine(2503) in 23S rRNA + 2 reduced [2Fe-2S]-[ferredoxin] + 2 S-adenosyl-L-methionine = 2-methyladenosine(2503) in 23S rRNA + 5'-deoxyadenosine + L-methionine + 2 oxidized [2Fe-2S]-[ferredoxin] + S-adenosyl-L-homocysteine. It catalyses the reaction adenosine(37) in tRNA + 2 reduced [2Fe-2S]-[ferredoxin] + 2 S-adenosyl-L-methionine = 2-methyladenosine(37) in tRNA + 5'-deoxyadenosine + L-methionine + 2 oxidized [2Fe-2S]-[ferredoxin] + S-adenosyl-L-homocysteine. Specifically methylates position 2 of adenine 2503 in 23S rRNA and position 2 of adenine 37 in tRNAs. This Roseiflexus sp. (strain RS-1) protein is Probable dual-specificity RNA methyltransferase RlmN.